A 529-amino-acid polypeptide reads, in one-letter code: Tyrosinase (529 aa).

The signal sequence occupies residues 1-18 (MLLAVLYCLLWSFQTSAG). Over 19–476 (HFPRACVSSK…YLEQASRIWS (458 aa)) the chain is Lumenal, melanosome. N-linked (GlcNAc...) asparagine glycans are attached at residues Asn-86, Asn-111, and Asn-161. Positions 180, 202, and 211 each coordinate Cu cation. Residue Asn-230 is glycosylated (N-linked (GlcNAc...) asparagine). The disordered stretch occupies residues 287 to 313 (SLCNGTPEGPLQRNPGNHDKSRTPRLP). Residue Asn-337 is glycosylated (N-linked (GlcNAc...) asparagine). Cu cation is bound by residues His-363 and His-367. N-linked (GlcNAc...) asparagine glycosylation occurs at Asn-371. A Cu cation-binding site is contributed by His-390. The chain crosses the membrane as a helical span at residues 477–497 (WLLGAAMVGAVLTALLAGLVS). The Cytoplasmic segment spans residues 498 to 529 (LLCRHKRKQLPEEKQPLLMEKEDYHSLYQSHL).

Belongs to the tyrosinase family. In terms of assembly, forms an OPN3-dependent complex with DCT in response to blue light in melanocytes. Requires Cu(2+) as cofactor. In terms of processing, glycosylated.

It is found in the melanosome membrane. It localises to the melanosome. The catalysed reaction is 2 L-dopa + O2 = 2 L-dopaquinone + 2 H2O. It catalyses the reaction L-tyrosine + O2 = L-dopaquinone + H2O. It carries out the reaction 2 5,6-dihydroxyindole-2-carboxylate + O2 = 2 indole-5,6-quinone-2-carboxylate + 2 H2O. This is a copper-containing oxidase that functions in the formation of pigments such as melanins and other polyphenolic compounds. Catalyzes the initial and rate limiting step in the cascade of reactions leading to melanin production from tyrosine. In addition to hydroxylating tyrosine to DOPA (3,4-dihydroxyphenylalanine), also catalyzes the oxidation of DOPA to DOPA-quinone, and possibly the oxidation of DHI (5,6-dihydroxyindole) to indole-5,6 quinone. The protein is Tyrosinase (TYR) of Gorilla gorilla gorilla (Western lowland gorilla).